A 513-amino-acid chain; its full sequence is Carotenoid isomerooxygenase (513 aa).

The Fe cation site is built by His-184, His-242, His-312, and His-503.

The protein belongs to the carotenoid oxygenase family. Fe(2+) serves as cofactor.

It carries out the reaction all-trans-zeaxanthin + O2 = (3R)-11-cis-3-hydroxyretinal + (3R)-all-trans-3-hydroxyretinal. It participates in cofactor metabolism; retinol metabolism. In terms of biological role, catalyzes the oxidative cleavage at the 15,15'-double bond of carotenoids and the simultaneous all-trans to 11-cis isomerization of one cleavage product. Carotenoids like 11-cis retinal can promote visual pigment biogenesis in the dark. Essential for the biosynthesis of the 3-hydroxyretinal chromophore of rhodopsin from zeaxanthin and for proper photoreceptor development. In Galleria mellonella (Greater wax moth), this protein is Carotenoid isomerooxygenase (ninaB).